The chain runs to 64 residues: Large ribosomal subunit protein bL35 (64 aa).

The protein belongs to the bacterial ribosomal protein bL35 family.

The sequence is that of Large ribosomal subunit protein bL35 from Shewanella halifaxensis (strain HAW-EB4).